The primary structure comprises 148 residues: Large ribosomal subunit protein bL9 (148 aa).

This sequence belongs to the bacterial ribosomal protein bL9 family.

Binds to the 23S rRNA. This is Large ribosomal subunit protein bL9 from Bacillus cereus (strain B4264).